The following is a 1377-amino-acid chain: ATP-dependent helicase/nuclease subunit A (1377 aa).

The region spanning 4-478 is the UvrD-like helicase ATP-binding domain; sequence TSWTPGQQKV…IDLSKNFRSR (475 aa). 25–32 provides a ligand contact to ATP; the sequence is AAAGSGKT. The region spanning 526–867 is the UvrD-like helicase C-terminal domain; sequence FLFSDTKTEL…RIMSIHKSKG (342 aa). Residues 1036–1065 are compositionally biased toward acidic residues; the sequence is FEEESDEQSDEERSDEERSDGEQSDGEQSD. The interval 1036-1072 is disordered; sequence FEEESDEQSDEERSDEERSDGEQSDGEQSDGEQPRKD.

It belongs to the helicase family. AddA subfamily. As to quaternary structure, heterodimer of AddA and AddB/RexB. It depends on Mg(2+) as a cofactor.

It carries out the reaction Couples ATP hydrolysis with the unwinding of duplex DNA by translocating in the 3'-5' direction.. The enzyme catalyses ATP + H2O = ADP + phosphate + H(+). The heterodimer acts as both an ATP-dependent DNA helicase and an ATP-dependent, dual-direction single-stranded exonuclease. Recognizes the chi site generating a DNA molecule suitable for the initiation of homologous recombination. The AddA nuclease domain is required for chi fragment generation; this subunit has the helicase and 3' -&gt; 5' nuclease activities. The protein is ATP-dependent helicase/nuclease subunit A of Lachnoclostridium phytofermentans (strain ATCC 700394 / DSM 18823 / ISDg) (Clostridium phytofermentans).